A 732-amino-acid polypeptide reads, in one-letter code: Protein kinase YpkA (732 aa).

A Protein kinase domain is found at 136-408; sequence VAETDKFAEG…SNEARLHEFL (273 aa). Residues 142–150 and Lys-163 each bind ATP; that span reads FAEGESHIS. Asp-270 functions as the Proton acceptor in the catalytic mechanism.

This sequence belongs to the protein kinase superfamily. Ser/Thr protein kinase family.

Its subcellular location is the secreted. The catalysed reaction is L-seryl-[protein] + ATP = O-phospho-L-seryl-[protein] + ADP + H(+). It carries out the reaction L-threonyl-[protein] + ATP = O-phospho-L-threonyl-[protein] + ADP + H(+). In terms of biological role, acts as a virulence determinant. In Yersinia pestis, this protein is Protein kinase YpkA (ypkA).